The sequence spans 336 residues: Phenylalanine--tRNA ligase alpha subunit (336 aa).

Glutamate 259 serves as a coordination point for Mg(2+).

The protein belongs to the class-II aminoacyl-tRNA synthetase family. Phe-tRNA synthetase alpha subunit type 1 subfamily. In terms of assembly, tetramer of two alpha and two beta subunits. It depends on Mg(2+) as a cofactor.

Its subcellular location is the cytoplasm. It carries out the reaction tRNA(Phe) + L-phenylalanine + ATP = L-phenylalanyl-tRNA(Phe) + AMP + diphosphate + H(+). The polypeptide is Phenylalanine--tRNA ligase alpha subunit (Tropheryma whipplei (strain Twist) (Whipple's bacillus)).